A 261-amino-acid polypeptide reads, in one-letter code: Complex I assembly factor TIMMDC1, mitochondrial (261 aa).

3 helical membrane-spanning segments follow: residues leucine 67–valine 87, tryptophan 131–valine 151, and alanine 183–methionine 203.

This sequence belongs to the Tim17/Tim22/Tim23 family. Associates with complex I assembly intermediates during its biogenesis in a NdufAF3 and NdufAF4 dependent manner.

The protein resides in the membrane. Its function is as follows. Chaperone protein involved in the assembly of the mitochondrial NADH:ubiquinone oxidoreductase complex (complex I). Essential for viability. In Drosophila melanogaster (Fruit fly), this protein is Complex I assembly factor TIMMDC1, mitochondrial.